Reading from the N-terminus, the 115-residue chain is Large ribosomal subunit protein uL22 (115 aa).

This sequence belongs to the universal ribosomal protein uL22 family. Part of the 50S ribosomal subunit.

Its function is as follows. This protein binds specifically to 23S rRNA; its binding is stimulated by other ribosomal proteins, e.g. L4, L17, and L20. It is important during the early stages of 50S assembly. It makes multiple contacts with different domains of the 23S rRNA in the assembled 50S subunit and ribosome. The globular domain of the protein is located near the polypeptide exit tunnel on the outside of the subunit, while an extended beta-hairpin is found that lines the wall of the exit tunnel in the center of the 70S ribosome. The protein is Large ribosomal subunit protein uL22 of Enterococcus faecalis (strain ATCC 700802 / V583).